The sequence spans 171 residues: Putative pre-16S rRNA nuclease (171 aa).

The protein belongs to the YqgF nuclease family.

The protein resides in the cytoplasm. Functionally, could be a nuclease involved in processing of the 5'-end of pre-16S rRNA. This Corynebacterium diphtheriae (strain ATCC 700971 / NCTC 13129 / Biotype gravis) protein is Putative pre-16S rRNA nuclease.